A 352-amino-acid polypeptide reads, in one-letter code: MKIAVLGAGAWGTALAVNAARAAGAGVTRHQVTLWARNAAQVQALQAERANTRYLPGIALPASLLLQGGGEASLGQAVSGQDLIILATPVSAARSMLTQLKHAAVPVAWLSKGFEAAVFAEPASASLAKPFGLMVHEVRAQVAPDLRAGVFSGPSFALEVARGQPTALVAASEHAEVREALVAAFHGASLRVYASDDMVGVEVGGAVKNVMAIAAGLCDGLQLGLNARAALITRGLAEITRLGVALGARAETFTGLSGLGDLVLTATGDLSRNRKVGLLLAQGKTLAEVLESLGHVAEGVYCARTVVQRAASLGVDMPIAQSVVALLDGKLKASEAVALLMEREPKTELDCY.

Residues Trp-11, Arg-37, and Lys-112 each contribute to the NADPH site. Residues Lys-112, Gly-153, and Ser-155 each contribute to the sn-glycerol 3-phosphate site. Ala-157 is an NADPH binding site. 5 residues coordinate sn-glycerol 3-phosphate: Lys-208, Asp-261, Ser-271, Arg-272, and Asn-273. Catalysis depends on Lys-208, which acts as the Proton acceptor. Residue Arg-272 coordinates NADPH. 2 residues coordinate NADPH: Val-296 and Glu-298.

It belongs to the NAD-dependent glycerol-3-phosphate dehydrogenase family.

The protein resides in the cytoplasm. It catalyses the reaction sn-glycerol 3-phosphate + NAD(+) = dihydroxyacetone phosphate + NADH + H(+). The catalysed reaction is sn-glycerol 3-phosphate + NADP(+) = dihydroxyacetone phosphate + NADPH + H(+). It participates in membrane lipid metabolism; glycerophospholipid metabolism. Its function is as follows. Catalyzes the reduction of the glycolytic intermediate dihydroxyacetone phosphate (DHAP) to sn-glycerol 3-phosphate (G3P), the key precursor for phospholipid synthesis. The chain is Glycerol-3-phosphate dehydrogenase [NAD(P)+] from Polaromonas naphthalenivorans (strain CJ2).